A 65-amino-acid chain; its full sequence is Beta-mammal toxin Tma1 (65 aa).

The 63-residue stretch at 2–64 (KEGYLVGNDG…TWNSAKNRCG (63 aa)) folds into the LCN-type CS-alpha/beta domain. Cystine bridges form between Cys-12–Cys-63, Cys-16–Cys-38, Cys-24–Cys-44, and Cys-28–Cys-46.

This sequence belongs to the long (4 C-C) scorpion toxin superfamily. Sodium channel inhibitor family. Expressed by the venom gland.

It localises to the secreted. Functionally, beta toxins bind voltage-independently at site-4 of sodium channels (Nav) and shift the voltage of activation toward more negative potentials thereby affecting sodium channel activation and promoting spontaneous and repetitive firing. This toxin acts on human Nav1.4/SCN4A and Nav1.6/SCN8A voltage-gated sodium channels. In Tityus macrochirus (Scorpion), this protein is Beta-mammal toxin Tma1.